We begin with the raw amino-acid sequence, 360 residues long: Peptide chain release factor 1 (360 aa).

Q235 bears the N5-methylglutamine mark. The tract at residues 284–313 is disordered; that stretch reads AKRQQAEASTRRNLLGSGDRSDRNRTYNFP.

The protein belongs to the prokaryotic/mitochondrial release factor family. In terms of processing, methylated by PrmC. Methylation increases the termination efficiency of RF1.

The protein resides in the cytoplasm. Its function is as follows. Peptide chain release factor 1 directs the termination of translation in response to the peptide chain termination codons UAG and UAA. The sequence is that of Peptide chain release factor 1 from Salmonella agona (strain SL483).